Reading from the N-terminus, the 328-residue chain is Malate dehydrogenase (328 aa).

12 to 18 (GAAGQIG) contacts NAD(+). Substrate is bound by residues Arg-95 and Arg-101. NAD(+)-binding positions include Asn-108, Gln-115, and 132-134 (VGN). Substrate is bound by residues Asn-134 and Arg-165. His-190 (proton acceptor) is an active-site residue.

Belongs to the LDH/MDH superfamily. MDH type 2 family.

It catalyses the reaction (S)-malate + NAD(+) = oxaloacetate + NADH + H(+). Functionally, catalyzes the reversible oxidation of malate to oxaloacetate. This chain is Malate dehydrogenase, found in Polaromonas sp. (strain JS666 / ATCC BAA-500).